A 371-amino-acid polypeptide reads, in one-letter code: DNA replication and repair protein RecF (371 aa).

ATP is bound at residue glycine 30 to threonine 37.

This sequence belongs to the RecF family.

Its subcellular location is the cytoplasm. In terms of biological role, the RecF protein is involved in DNA metabolism; it is required for DNA replication and normal SOS inducibility. RecF binds preferentially to single-stranded, linear DNA. It also seems to bind ATP. This chain is DNA replication and repair protein RecF, found in Phocaeicola vulgatus (strain ATCC 8482 / DSM 1447 / JCM 5826 / CCUG 4940 / NBRC 14291 / NCTC 11154) (Bacteroides vulgatus).